A 284-amino-acid chain; its full sequence is MSADGRSGRLRFTKMHGAGNDFVVLDLRDGTPPPDAALAAQLADRHFGIGCDQILTIEAPRSEGAAAAYGIWNSDGSAARQCGNGARCVAAWLVRDGTAQGERFIIDSPATAHAVERLDGDRYAVAMGVPQFEPTQIPLAGFAHARDEYALPVHGETVRFGAVSMGNPHAVVEVGRVDAAPVERVGALLQQNAAFPDSVNVGFAQVVDPVHVRLRVFERGVGETLACGSGACAAAAVLMQRGRVERDVQVSLPGGELRIRWPGDQEQVVMSGPAVFVFDGEWNR.

Asn20, Gln53, and Asn73 together coordinate substrate. Cys82 serves as the catalytic Proton donor. Substrate contacts are provided by residues Gly83–Asn84, Asn167, Asn200, and Glu218–Arg219. Cys227 (proton acceptor) is an active-site residue. Gly228–Ser229 is a substrate binding site.

This sequence belongs to the diaminopimelate epimerase family. As to quaternary structure, homodimer.

Its subcellular location is the cytoplasm. The catalysed reaction is (2S,6S)-2,6-diaminopimelate = meso-2,6-diaminopimelate. Its pathway is amino-acid biosynthesis; L-lysine biosynthesis via DAP pathway; DL-2,6-diaminopimelate from LL-2,6-diaminopimelate: step 1/1. In terms of biological role, catalyzes the stereoinversion of LL-2,6-diaminopimelate (L,L-DAP) to meso-diaminopimelate (meso-DAP), a precursor of L-lysine and an essential component of the bacterial peptidoglycan. The chain is Diaminopimelate epimerase from Xanthomonas axonopodis pv. citri (strain 306).